An 883-amino-acid chain; its full sequence is Alanine--tRNA ligase (883 aa).

The Zn(2+) site is built by histidine 562, histidine 566, cysteine 675, and histidine 679.

It belongs to the class-II aminoacyl-tRNA synthetase family. It depends on Zn(2+) as a cofactor.

Its subcellular location is the cytoplasm. The enzyme catalyses tRNA(Ala) + L-alanine + ATP = L-alanyl-tRNA(Ala) + AMP + diphosphate. Catalyzes the attachment of alanine to tRNA(Ala) in a two-step reaction: alanine is first activated by ATP to form Ala-AMP and then transferred to the acceptor end of tRNA(Ala). Also edits incorrectly charged Ser-tRNA(Ala) and Gly-tRNA(Ala) via its editing domain. The protein is Alanine--tRNA ligase of Ruegeria sp. (strain TM1040) (Silicibacter sp.).